Here is a 3707-residue protein sequence, read N- to C-terminus: CUB and sushi domain-containing protein 3 (3707 aa).

Residues 1-21 (MKGSRKGESRAKESKPREPGT) show a composition bias toward basic and acidic residues. The tract at residues 1–22 (MKGSRKGESRAKESKPREPGTR) is disordered. Residues 1 to 42 (MKGSRKGESRAKESKPREPGTRRCAKCGRLDFILKKKMGIKS) are Cytoplasmic-facing. Residues 43–63 (GFTFWNLVFLLTLSCVKGFIY) form a helical membrane-spanning segment. Topologically, residues 64–3630 (TCGGTLKGLN…NQPHGTNSSS (3567 aa)) are extracellular. Disulfide bonds link cysteine 65-cysteine 91, cysteine 178-cysteine 218, cysteine 204-cysteine 235, and cysteine 241-cysteine 267. Residues 65–173 (CGGTLKGLNG…HGFKVYYEEL (109 aa)) form the CUB 1 domain. N-linked (GlcNAc...) asparagine glycans are attached at residues asparagine 73 and asparagine 90. The Sushi 1 domain occupies 176 to 237 (SSCGNPGVPP…WDFPVPICRA (62 aa)). Residues 241 to 345 (CGGTMRGSSG…RGFSAPYQGS (105 aa)) form the CUB 2 domain. The tract at residues 388-437 (HRLSEEQRVQVRSLSDSGLDPNTPEDQLSPHQADTQSTSRRPRNAEQIER) is disordered. Residues 411 to 426 (PEDQLSPHQADTQSTS) are compositionally biased toward polar residues. Positions 484–545 (NLCPDPGEPE…WSDHRPVCKV (62 aa)) constitute a Sushi 2 domain. Disulfide bonds link cysteine 486–cysteine 526, cysteine 512–cysteine 543, cysteine 548–cysteine 574, cysteine 664–cysteine 704, cysteine 690–cysteine 717, and cysteine 721–cysteine 747. The region spanning 548 to 659 (CGSNLQGPSG…VGFKVNYKEI (112 aa)) is the CUB 3 domain. The Sushi 3 domain maps to 662-719 (ESCGDPGTPLYGIREGDGFSNRDVLRFECQFGFELIGEKSIVCQENNQWSANIPICIF). The CUB 4 domain occupies 721–829 (CLSNFTAPMG…RGFNITYNTF (109 aa)). 2 N-linked (GlcNAc...) asparagine glycosylation sites follow: asparagine 724 and asparagine 823. Positions 832-893 (NECPDPGIPI…WSGPIPRCGA (62 aa)) constitute a Sushi 4 domain. 3 disulfides stabilise this stretch: cysteine 834–cysteine 875, cysteine 860–cysteine 891, and cysteine 895–cysteine 921. The CUB 5 domain occupies 895-1003 (CGGHFSAPSG…NGFKIHYESV (109 aa)). Residue asparagine 966 is glycosylated (N-linked (GlcNAc...) asparagine). One can recognise a Sushi 5 domain in the interval 1008 to 1065 (YSCLDPGIPVHGRRYGHDFSIGSTVSFSCDPGYRLSHEEPLLCEKNHWWSHPLPTCDA). Disulfide bonds link cysteine 1010/cysteine 1050, cysteine 1036/cysteine 1063, and cysteine 1067/cysteine 1093. Residues 1067-1177 (CGGDVRGPSG…EGFNITFSEY (111 aa)) form the CUB 6 domain. 3 N-linked (GlcNAc...) asparagine glycosylation sites follow: asparagine 1092, asparagine 1126, and asparagine 1171. Residues 1180-1239 (EPCEDPGIPQYGSRVGFSFGVGDTLTFSCSLGYRLEGSSEIICLGGGRRVWSAPLPRCVA) form the Sushi 6 domain. Intrachain disulfides connect cysteine 1182/cysteine 1222, cysteine 1208/cysteine 1237, and cysteine 1241/cysteine 1267. One can recognise a CUB 7 domain in the interval 1241 to 1349 (CGASATNNEG…EGFQLVYTSF (109 aa)). Residue asparagine 1280 is glycosylated (N-linked (GlcNAc...) asparagine). In terms of domain architecture, Sushi 7 spans 1352-1412 (SHCEDPGIPQ…WDYPLPSCIA (61 aa)). Disulfide bonds link cysteine 1354-cysteine 1395, cysteine 1381-cysteine 1410, cysteine 1414-cysteine 1441, cysteine 1528-cysteine 1568, cysteine 1554-cysteine 1584, cysteine 1588-cysteine 1614, cysteine 1701-cysteine 1741, cysteine 1727-cysteine 1758, cysteine 1762-cysteine 1788, cysteine 1878-cysteine 1918, cysteine 1904-cysteine 1935, and cysteine 1939-cysteine 1965. The region spanning 1414-1523 (CGGRFKGESS…SGFAIQFSSS (110 aa)) is the CUB 8 domain. A Sushi 8 domain is found at 1526–1586 (TACRDPGVPM…WQPSPPVCIA (61 aa)). N-linked (GlcNAc...) asparagine glycosylation occurs at asparagine 1536. In terms of domain architecture, CUB 9 spans 1588 to 1696 (CGGNLTGSSG…TGFHLEYKAK (109 aa)). Residues asparagine 1591 and asparagine 1709 are each glycosylated (N-linked (GlcNAc...) asparagine). The 62-residue stretch at 1699-1760 (ESCFDPGNIM…WNRVLPSCHA (62 aa)) folds into the Sushi 9 domain. A CUB 10 domain is found at 1762 to 1870 (CGSRSTGSEG…KGFHFVYQAV (109 aa)). N-linked (GlcNAc...) asparagine glycosylation occurs at asparagine 1781. The Sushi 10 domain occupies 1876 to 1937 (TQCSSVPEPR…WNDSLPTCIV (62 aa)). Asparagine 1929 carries an N-linked (GlcNAc...) asparagine glycan. Residues 1939-2047 (CGGILTKRKG…AGFHLEYTAI (109 aa)) enclose the CUB 11 domain. An N-linked (GlcNAc...) asparagine glycan is attached at asparagine 2019. One can recognise a Sushi 11 domain in the interval 2050-2109 (DSCPEPQTPSSGIKVGDRYMVGDVVSFQCDQGYSLQGHSHITCMPGPVRRWNYPIPICLA). Cystine bridges form between cysteine 2052/cysteine 2092, cysteine 2078/cysteine 2107, and cysteine 2111/cysteine 2137. The CUB 12 domain occupies 2111-2219 (CGGAMSDFSG…QGFHIVYQAY (109 aa)). Asparagine 2155 carries an N-linked (GlcNAc...) asparagine glycan. One can recognise a Sushi 12 domain in the interval 2222–2281 (QSCPDPRPFRNGFVIGNDFTVGQTISFECFPGYTLIGNSALTCLHGVSRNWNHPLPRCEA). 36 disulfide bridges follow: cysteine 2224/cysteine 2264, cysteine 2250/cysteine 2279, cysteine 2283/cysteine 2309, cysteine 2395/cysteine 2437, cysteine 2423/cysteine 2452, cysteine 2456/cysteine 2484, cysteine 2569/cysteine 2610, cysteine 2596/cysteine 2627, cysteine 2632/cysteine 2674, cysteine 2658/cysteine 2689, cysteine 2694/cysteine 2739, cysteine 2725/cysteine 2754, cysteine 2759/cysteine 2799, cysteine 2785/cysteine 2812, cysteine 2817/cysteine 2857, cysteine 2843/cysteine 2870, cysteine 2875/cysteine 2915, cysteine 2901/cysteine 2928, cysteine 2933/cysteine 2977, cysteine 2963/cysteine 2990, cysteine 2995/cysteine 3035, cysteine 3021/cysteine 3048, cysteine 3056/cysteine 3096, cysteine 3082/cysteine 3109, cysteine 3114/cysteine 3155, cysteine 3141/cysteine 3168, cysteine 3173/cysteine 3215, cysteine 3199/cysteine 3228, cysteine 3233/cysteine 3273, cysteine 3259/cysteine 3286, cysteine 3291/cysteine 3331, cysteine 3317/cysteine 3344, cysteine 3352/cysteine 3393, cysteine 3379/cysteine 3406, cysteine 3411/cysteine 3453, and cysteine 3438/cysteine 3466. The region spanning 2283–2394 (CGGNITAMNG…LSYHAYQLRV (112 aa)) is the CUB 13 domain. N-linked (GlcNAc...) asparagine glycans are attached at residues asparagine 2286 and asparagine 2291. One can recognise a Sushi 13 domain in the interval 2393 to 2454 (RVCQPPPPVP…MDGAPPVCQV (62 aa)). In terms of domain architecture, CUB 14 spans 2456 to 2567 (CPANELRLDS…KGFRIRYIAF (112 aa)). 15 consecutive Sushi domains span residues 2567–2629 (FYCS…ACQA), 2630–2691 (ISCG…RCVV), 2692–2756 (VTCP…YCQI), 2757–2814 (ISCG…RCLA), 2815–2872 (GHCG…SCVP), 2873–2930 (VSCG…VCKV), 2931–2992 (VNCS…ECIM), 2993–3050 (IDCG…HCSG), 3054–3111 (GTCG…ECKA), 3112–3170 (VQCG…NCTI), 3171–3230 (ISCG…TCRA), 3231–3288 (VTCS…QCLP), 3289–3346 (KFCG…HCIE), 3350–3408 (TSCE…ECIP), and 3409–3468 (HSCK…VCEA). Residues 3052-3065 (TTGTCGDPGTPGHG) show a composition bias toward low complexity. The segment at 3052-3071 (TTGTCGDPGTPGHGSRQESD) is disordered. Residues 3631 to 3651 (VAIAILVPFFALIFAGFGFYL) traverse the membrane as a helical segment. The Cytoplasmic segment spans residues 3652-3707 (YKQRTAPKTQYTGCSVHENNNGQAAFENPMYDTNAKSVEGKAVRFDPNLNTVCTMV).

It belongs to the CSMD family. Expressed in the apical dendrites of postnatal hippocampal neurons (at protein level).

It localises to the cell membrane. In terms of biological role, involved in dendrite development. In Mus musculus (Mouse), this protein is CUB and sushi domain-containing protein 3 (Csmd3).